A 308-amino-acid polypeptide reads, in one-letter code: Ornithine carbamoyltransferase (308 aa).

Residues 57-60 (STRT), Gln84, Arg108, and 135-138 (HPCQ) contribute to the carbamoyl phosphate site. Residues Asn166, Asp224, and 228 to 229 (SM) each bind L-ornithine. Residues 264-265 (CL) and Arg292 contribute to the carbamoyl phosphate site.

Belongs to the aspartate/ornithine carbamoyltransferase superfamily. OTCase family.

The protein localises to the cytoplasm. The enzyme catalyses carbamoyl phosphate + L-ornithine = L-citrulline + phosphate + H(+). It functions in the pathway amino-acid biosynthesis; L-arginine biosynthesis; L-arginine from L-ornithine and carbamoyl phosphate: step 1/3. Its function is as follows. Reversibly catalyzes the transfer of the carbamoyl group from carbamoyl phosphate (CP) to the N(epsilon) atom of ornithine (ORN) to produce L-citrulline. The chain is Ornithine carbamoyltransferase from Ralstonia nicotianae (strain ATCC BAA-1114 / GMI1000) (Ralstonia solanacearum).